The sequence spans 205 residues: Probable nicotinate-nucleotide adenylyltransferase (205 aa).

Belongs to the NadD family.

It catalyses the reaction nicotinate beta-D-ribonucleotide + ATP + H(+) = deamido-NAD(+) + diphosphate. Its pathway is cofactor biosynthesis; NAD(+) biosynthesis; deamido-NAD(+) from nicotinate D-ribonucleotide: step 1/1. Functionally, catalyzes the reversible adenylation of nicotinate mononucleotide (NaMN) to nicotinic acid adenine dinucleotide (NaAD). The sequence is that of Probable nicotinate-nucleotide adenylyltransferase from Nocardioides sp. (strain ATCC BAA-499 / JS614).